A 141-amino-acid polypeptide reads, in one-letter code: MAKKVANIVKLQIPAGAATPAPPVGPALGQAGINIMGFTKEFNARTADQKGMLIPVVITVYEDRSFDFITKTPPAAVLLKKAAGVEHGSGEPNTNKVASVTKDQVKEIAETKMQDLNAADVEAAMRMIEGTARSMGFTVED.

It belongs to the universal ribosomal protein uL11 family. In terms of assembly, part of the ribosomal stalk of the 50S ribosomal subunit. Interacts with L10 and the large rRNA to form the base of the stalk. L10 forms an elongated spine to which L12 dimers bind in a sequential fashion forming a multimeric L10(L12)X complex. Post-translationally, one or more lysine residues are methylated.

In terms of biological role, forms part of the ribosomal stalk which helps the ribosome interact with GTP-bound translation factors. The chain is Large ribosomal subunit protein uL11 from Limosilactobacillus reuteri (strain DSM 20016) (Lactobacillus reuteri).